We begin with the raw amino-acid sequence, 507 residues long: Cystathionine beta-synthase (507 aa).

Lys53 is subject to N6-(pyridoxal phosphate)lysine. Position 84 (Asn84) interacts with pyridoxal 5'-phosphate. A Phosphoserine modification is found at Ser134. Residues Gly196–Thr200 and Ser289 contribute to the pyridoxal 5'-phosphate site. Phosphoserine occurs at positions 350 and 424. Residues His373–Asn432 form the CBS domain.

The protein belongs to the cysteine synthase/cystathionine beta-synthase family. It depends on pyridoxal 5'-phosphate as a cofactor.

The enzyme catalyses L-homocysteine + L-serine = L,L-cystathionine + H2O. It participates in amino-acid biosynthesis; L-cysteine biosynthesis; L-cysteine from L-homocysteine and L-serine: step 1/2. The polypeptide is Cystathionine beta-synthase (CYS4) (Saccharomyces cerevisiae (strain ATCC 204508 / S288c) (Baker's yeast)).